We begin with the raw amino-acid sequence, 393 residues long: uncharacterized protein (393 aa).

The region spanning 12–70 (APLLGSKIKLNIEKLAIGGAGVARHEGMVVFVPQAAPNEEILAEITLVKKNFMEARVVE) is the TRAM domain. [4Fe-4S] cluster is bound by residues Cys83, Cys89, Cys92, and Cys166. S-adenosyl-L-methionine is bound by residues Gln221, Tyr250, Glu273, and Asp316. The active-site Nucleophile is the Cys343.

This sequence belongs to the class I-like SAM-binding methyltransferase superfamily. RNA M5U methyltransferase family.

This is an uncharacterized protein from Bdellovibrio bacteriovorus (strain ATCC 15356 / DSM 50701 / NCIMB 9529 / HD100).